Consider the following 442-residue polypeptide: Mannosylglycerate hydrolase (442 aa).

Residues Y38, 42–45 (WSWD), Y90, Q116, and G176 each bind substrate. Residue D178 is the Proton donor of the active site. Substrate-binding positions include R213 and 369-370 (YW). The active-site Proton acceptor is the E413.

It belongs to the glycosyl hydrolase 63 family. In terms of assembly, homodimer in solution.

It catalyses the reaction (2R)-2-O-(alpha-D-mannosyl)-glycerate + H2O = D-mannose + (R)-glycerate. The enzyme catalyses (2R)-2-O-(alpha-D-glucopyranosyl)-glycerate + H2O = (R)-glycerate + D-glucose. Activity is not stimulated by divalent cations and not affected in the presence of EDTA. In terms of biological role, hydrolase that catalyzes the hydrolysis of mannosylglycerate (MG), a solute produced in response to osmotic stress in thermophiles, into mannose and glycerate. Can also hydrolyze glucosylglycerate (GG) to glucose and glycerate, with similar catalytic efficiency. Is highly specific for MG and GG, and cannot use mannosylglyceramide (MGA), glucosylglycerol, mannosylglucosylglycerate (MGG), glucosylglucosylglycerate (GGG) or trehalose as substrates. The sequence is that of Mannosylglycerate hydrolase from Rubrobacter radiotolerans (Arthrobacter radiotolerans).